Here is a 144-residue protein sequence, read N- to C-terminus: Large ribosomal subunit protein uL11 (144 aa).

It belongs to the universal ribosomal protein uL11 family. In terms of assembly, part of the ribosomal stalk of the 50S ribosomal subunit. Interacts with L10 and the large rRNA to form the base of the stalk. L10 forms an elongated spine to which L12 dimers bind in a sequential fashion forming a multimeric L10(L12)X complex. Contacts the CTC protein (RL25). One or more lysine residues are methylated.

In terms of biological role, forms part of the ribosomal stalk which helps the ribosome interact with GTP-bound translation factors. This Deinococcus radiodurans (strain ATCC 13939 / DSM 20539 / JCM 16871 / CCUG 27074 / LMG 4051 / NBRC 15346 / NCIMB 9279 / VKM B-1422 / R1) protein is Large ribosomal subunit protein uL11.